The chain runs to 997 residues: Protein translocase subunit SecA (997 aa).

ATP is bound by residues Gln84, 102–106 (GEGKT), and Asp582. The interval 950–997 (PYVPVPEAKPEPSEVFGVERKRATPPPQPGLSRAERRRLMRQEKKRKK) is disordered. A compositionally biased stretch (basic and acidic residues) spans 957–971 (AKPEPSEVFGVERKR). The span at 984–997 (ERRRLMRQEKKRKK) shows a compositional bias: basic residues.

Belongs to the SecA family. Monomer and homodimer. Part of the essential Sec protein translocation apparatus which comprises SecA, SecYEG and auxiliary proteins SecDF. Other proteins may also be involved.

It is found in the cell inner membrane. It localises to the cytoplasm. It catalyses the reaction ATP + H2O + cellular proteinSide 1 = ADP + phosphate + cellular proteinSide 2.. Part of the Sec protein translocase complex. Interacts with the SecYEG preprotein conducting channel. Has a central role in coupling the hydrolysis of ATP to the transfer of proteins into and across the cell membrane, serving as an ATP-driven molecular motor driving the stepwise translocation of polypeptide chains across the membrane. The sequence is that of Protein translocase subunit SecA from Thermus thermophilus (strain ATCC BAA-163 / DSM 7039 / HB27).